The sequence spans 501 residues: Glycoprotein 3-alpha-L-fucosyltransferase A (501 aa).

Over 1-39 the chain is Cytoplasmic; sequence MGVFSNLRGPKIGLTHEELPVVANGSTSSSSSPSSFKRK. A helical; Signal-anchor for type II membrane protein membrane pass occupies residues 40-60; the sequence is VSTFLPICVALVVIIEIGFLC. Topologically, residues 61–501 are lumenal; sequence RLDNASLVDT…PCPKFEVVFV (441 aa). Residues Asn-64, Asn-337, Asn-420, and Asn-481 are each glycosylated (N-linked (GlcNAc...) asparagine).

It belongs to the glycosyltransferase 10 family. Mg(2+) serves as cofactor. Requires Mn(2+) as cofactor. Glycosylation may be important for enzymatic activity.

It is found in the golgi apparatus. Its subcellular location is the golgi stack membrane. It catalyses the reaction N(4)-{beta-D-GlcNAc-(1-&gt;2)-alpha-D-Man-(1-&gt;3)-[beta-D-GlcNAc-(1-&gt;2)-alpha-D-Man-(1-&gt;6)]-beta-D-Man-(1-&gt;4)-beta-D-GlcNAc-(1-&gt;4)-beta-D-GlcNAc}-L-asparaginyl-[protein] + GDP-beta-L-fucose = N(4)-{beta-D-GlcNAc-(1-&gt;2)-alpha-D-Man-(1-&gt;3)-[beta-D-GlcNAc-(1-&gt;2)-alpha-D-Man-(1-&gt;6)]-beta-D-Man-(1-&gt;4)-beta-D-GlcNAc-(1-&gt;4)-[alpha-L-Fuc(1-&gt;3)]-beta-D-GlcNAc}-L-asparaginyl-[protein] + GDP + H(+). It functions in the pathway protein modification; protein glycosylation. Its activity is regulated as follows. Inhibited by Cu(2+) and Zn(2+). Functionally, involved in cell wall synthesis. Preferentially catalyzes the addition of fucose in alpha 1-3 linkage to the first GlcNAc residue next to the peptide chains in N-glycans. This is Glycoprotein 3-alpha-L-fucosyltransferase A (FUT11) from Arabidopsis thaliana (Mouse-ear cress).